The following is a 409-amino-acid chain: Sex-determination protein fem-3 (409 aa).

Component of a complex containing fem-1, fem-2 and fem-3. Interacts with fem-1 and fem-2 (via N-terminus). Part of a E3 ubiquitin-protein ligase complex, at least composed of cul-2, elc-1, tra-1, fem-1, fem-2 and fem-3; mediates the ubiquitination and subsequent proteasomal degradation of tra-1. Interacts with sel-10. Interacts with tra-2.

Required for male development. In XO (male) animals, fem-3 directs male differentiation in all tissues. In XX (hermaphrodite animals), it specifies the first 80 or so germ cells to be sperm. Negatively regulates male development when bound to tra-2. In Caenorhabditis briggsae, this protein is Sex-determination protein fem-3.